Here is a 352-residue protein sequence, read N- to C-terminus: tRNA N6-adenosine threonylcarbamoyltransferase (352 aa).

A divalent metal cation-binding residues include His-114, His-118, and Tyr-135. Residues 135–139 (YVSGG), Asp-167, Gly-182, Glu-186, and Asn-283 each bind substrate. A divalent metal cation is bound at residue Asp-311.

It belongs to the KAE1 / TsaD family. Component of the EKC/KEOPS complex composed of at least BUD32, CGI121, GON7, KAE1 and PCC1; the whole complex dimerizes. Requires a divalent metal cation as cofactor.

Its subcellular location is the cytoplasm. The protein localises to the nucleus. The catalysed reaction is L-threonylcarbamoyladenylate + adenosine(37) in tRNA = N(6)-L-threonylcarbamoyladenosine(37) in tRNA + AMP + H(+). Its function is as follows. Component of the EKC/KEOPS complex that is required for the formation of a threonylcarbamoyl group on adenosine at position 37 (t(6)A37) in tRNAs that read codons beginning with adenine. The complex is probably involved in the transfer of the threonylcarbamoyl moiety of threonylcarbamoyl-AMP (TC-AMP) to the N6 group of A37. KAE1 likely plays a direct catalytic role in this reaction, but requires other protein(s) of the complex to fulfill this activity. The EKC/KEOPS complex also promotes both telomere uncapping and telomere elongation. The complex is required for efficient recruitment of transcriptional coactivators. The protein is tRNA N6-adenosine threonylcarbamoyltransferase of Phaeosphaeria nodorum (strain SN15 / ATCC MYA-4574 / FGSC 10173) (Glume blotch fungus).